A 519-amino-acid chain; its full sequence is ATP synthase subunit alpha (519 aa).

Position 174-181 (174-181 (GDRQTGKT)) interacts with ATP.

The protein belongs to the ATPase alpha/beta chains family. In terms of assembly, F-type ATPases have 2 components, CF(1) - the catalytic core - and CF(0) - the membrane proton channel. CF(1) has five subunits: alpha(3), beta(3), gamma(1), delta(1), epsilon(1). CF(0) has three main subunits: a(1), b(2) and c(9-12). The alpha and beta chains form an alternating ring which encloses part of the gamma chain. CF(1) is attached to CF(0) by a central stalk formed by the gamma and epsilon chains, while a peripheral stalk is formed by the delta and b chains.

The protein resides in the cell inner membrane. The catalysed reaction is ATP + H2O + 4 H(+)(in) = ADP + phosphate + 5 H(+)(out). Its function is as follows. Produces ATP from ADP in the presence of a proton gradient across the membrane. The alpha chain is a regulatory subunit. This chain is ATP synthase subunit alpha, found in Paracidovorax citrulli (strain AAC00-1) (Acidovorax citrulli).